The primary structure comprises 414 residues: Gamma-glutamyl phosphate reductase (414 aa).

Belongs to the gamma-glutamyl phosphate reductase family.

It localises to the cytoplasm. The catalysed reaction is L-glutamate 5-semialdehyde + phosphate + NADP(+) = L-glutamyl 5-phosphate + NADPH + H(+). It participates in amino-acid biosynthesis; L-proline biosynthesis; L-glutamate 5-semialdehyde from L-glutamate: step 2/2. Functionally, catalyzes the NADPH-dependent reduction of L-glutamate 5-phosphate into L-glutamate 5-semialdehyde and phosphate. The product spontaneously undergoes cyclization to form 1-pyrroline-5-carboxylate. This Thermoanaerobacter sp. (strain X514) protein is Gamma-glutamyl phosphate reductase.